The sequence spans 169 residues: Peptide deformylase (169 aa).

The Fe cation site is built by cysteine 91 and histidine 133. Glutamate 134 is an active-site residue. Histidine 137 is a binding site for Fe cation.

This sequence belongs to the polypeptide deformylase family. Fe(2+) serves as cofactor.

The enzyme catalyses N-terminal N-formyl-L-methionyl-[peptide] + H2O = N-terminal L-methionyl-[peptide] + formate. Its function is as follows. Removes the formyl group from the N-terminal Met of newly synthesized proteins. Requires at least a dipeptide for an efficient rate of reaction. N-terminal L-methionine is a prerequisite for activity but the enzyme has broad specificity at other positions. This chain is Peptide deformylase, found in Salmonella arizonae (strain ATCC BAA-731 / CDC346-86 / RSK2980).